The chain runs to 326 residues: Vitamin B12 import system permease protein BtuC (326 aa).

Helical transmembrane passes span 15–35 (WLLCLSVLMLLALLLSLCAGE), 61–81 (LAVLLVGAALAISGAVMQALF), 88–108 (PGLLGVSNGAGVGLIAAVLLG), 112–132 (LPNWALGLCAIAGALIITLIL), 146–166 (LLAGVALGIICSALMTWAIYF), 184–204 (GGVDWRQSWLMLALIPVLLWI), 240–260 (GWMVGVSVALAGAIGFIGLVI), 274–294 (VLLPGCALAGASALLLADVVA), and 302–322 (ELPIGVVTATLGAPVFIWLLL).

The protein belongs to the binding-protein-dependent transport system permease family. FecCD subfamily. In terms of assembly, the complex is composed of two ATP-binding proteins (BtuD), two transmembrane proteins (BtuC) and a solute-binding protein (BtuF).

The protein localises to the cell inner membrane. Part of the ABC transporter complex BtuCDF involved in vitamin B12 import. Involved in the translocation of the substrate across the membrane. The sequence is that of Vitamin B12 import system permease protein BtuC from Escherichia coli (strain SE11).